We begin with the raw amino-acid sequence, 355 residues long: Phospho-N-acetylmuramoyl-pentapeptide-transferase (355 aa).

10 consecutive transmembrane segments (helical) span residues 3–23 (GVLI…PWVI), 56–76 (VIIV…GIGF), 80–100 (GLLV…DDYI), 120–140 (AAVA…AGLL), 156–176 (VGII…SNAV), 185–205 (LAAG…FWQF), 224–244 (PLDV…FLWW), 251–271 (IFMG…IAIV), 276–296 (LLLV…MIQV), and 330–350 (FWIV…AEFL).

It belongs to the glycosyltransferase 4 family. MraY subfamily. Mg(2+) is required as a cofactor.

The protein localises to the cell membrane. The catalysed reaction is UDP-N-acetyl-alpha-D-muramoyl-L-alanyl-gamma-D-glutamyl-meso-2,6-diaminopimeloyl-D-alanyl-D-alanine + di-trans,octa-cis-undecaprenyl phosphate = di-trans,octa-cis-undecaprenyl diphospho-N-acetyl-alpha-D-muramoyl-L-alanyl-D-glutamyl-meso-2,6-diaminopimeloyl-D-alanyl-D-alanine + UMP. Its pathway is cell wall biogenesis; peptidoglycan biosynthesis. Catalyzes the initial step of the lipid cycle reactions in the biosynthesis of the cell wall peptidoglycan: transfers peptidoglycan precursor phospho-MurNAc-pentapeptide from UDP-MurNAc-pentapeptide onto the lipid carrier undecaprenyl phosphate, yielding undecaprenyl-pyrophosphoryl-MurNAc-pentapeptide, known as lipid I. The chain is Phospho-N-acetylmuramoyl-pentapeptide-transferase from Frankia casuarinae (strain DSM 45818 / CECT 9043 / HFP020203 / CcI3).